A 340-amino-acid polypeptide reads, in one-letter code: Protein-arginine kinase (340 aa).

Residues 21 to 242 form the Phosphagen kinase C-terminal domain; sequence VVLSSRIRLA…EQIIMQERVA (222 aa). ATP contacts are provided by residues 24-28, His-79, Arg-113, 164-168, and 195-200; these read SSRIR, RASVM, and RGIYGE.

Belongs to the ATP:guanido phosphotransferase family.

The enzyme catalyses L-arginyl-[protein] + ATP = N(omega)-phospho-L-arginyl-[protein] + ADP + H(+). Functionally, catalyzes the specific phosphorylation of arginine residues in proteins. The chain is Protein-arginine kinase from Listeria monocytogenes serovar 1/2a (strain ATCC BAA-679 / EGD-e).